A 432-amino-acid polypeptide reads, in one-letter code: C4-dicarboxylate transport protein (432 aa).

Transmembrane regions (helical) follow at residues 8–28 (ILYV…HYWP), 44–64 (LIKM…IAGM), 78–98 (LLYF…AAHL), 148–168 (GDIL…AVLG), 188–208 (IVHV…AFTI), 222–242 (LIGT…GTIA), 307–327 (IYMT…LTLM), and 355–375 (AATL…ILGI).

This sequence belongs to the dicarboxylate/amino acid:cation symporter (DAACS) (TC 2.A.23) family.

It localises to the cell inner membrane. Responsible for the transport of dicarboxylates such as succinate, fumarate, and malate from the periplasm across the membrane. This is C4-dicarboxylate transport protein from Cupriavidus necator (strain ATCC 17699 / DSM 428 / KCTC 22496 / NCIMB 10442 / H16 / Stanier 337) (Ralstonia eutropha).